The primary structure comprises 153 residues: Ribosome maturation factor RimP (153 aa).

Belongs to the RimP family.

It is found in the cytoplasm. Functionally, required for maturation of 30S ribosomal subunits. This chain is Ribosome maturation factor RimP, found in Pelotomaculum thermopropionicum (strain DSM 13744 / JCM 10971 / SI).